A 105-amino-acid polypeptide reads, in one-letter code: Probable non-functional immunoglobulin lambda variable 5-48 (105 aa).

An N-terminal signal peptide occupies residues 1-19 (MAWTPLLLLFLSHCTGSLS). The framework-1 stretch occupies residues 20–44 (QAVLTQPTSLSASPGASARLTCTLR). An Ig-like domain is found at 20 to 105 (QAVLTQPTSL…NAGILFISGL (86 aa)). A complementarity-determining-1 region spans residues 45-53 (SGISVGSYR). The interval 54–70 (IYWYQQKPGSPPRYLLN) is framework-2. The interval 71 to 77 (YYSDSDK) is complementarity-determining-2. The framework-3 stretch occupies residues 78–105 (HQGSGVPSRFSGSKDASTNAGILFISGL).

Immunoglobulins are composed of two identical heavy chains and two identical light chains; disulfide-linked.

It is found in the secreted. It localises to the cell membrane. Its function is as follows. Probable non-functional open reading frame (ORF) of V region of the variable domain of immunoglobulin light chains. Non-functional ORF generally cannot participate in the synthesis of a productive immunoglobulin chain due to altered V-(D)-J or switch recombination and/or splicing site (at mRNA level) and/or conserved amino acid change (protein level). Immunoglobulins, also known as antibodies, are membrane-bound or secreted glycoproteins produced by B lymphocytes. In the recognition phase of humoral immunity, the membrane-bound immunoglobulins serve as receptors which, upon binding of a specific antigen, trigger the clonal expansion and differentiation of B lymphocytes into immunoglobulins-secreting plasma cells. Secreted immunoglobulins mediate the effector phase of humoral immunity, which results in the elimination of bound antigens. The antigen binding site is formed by the variable domain of one heavy chain, together with that of its associated light chain. Thus, each immunoglobulin has two antigen binding sites with remarkable affinity for a particular antigen. The variable domains are assembled by a process called V-(D)-J rearrangement and can then be subjected to somatic hypermutations which, after exposure to antigen and selection, allow affinity maturation for a particular antigen. This chain is Probable non-functional immunoglobulin lambda variable 5-48, found in Homo sapiens (Human).